We begin with the raw amino-acid sequence, 232 residues long: Large ribosomal subunit protein uL1 (232 aa).

The protein belongs to the universal ribosomal protein uL1 family. Part of the 50S ribosomal subunit.

In terms of biological role, binds directly to 23S rRNA. The L1 stalk is quite mobile in the ribosome, and is involved in E site tRNA release. Functionally, protein L1 is also a translational repressor protein, it controls the translation of the L11 operon by binding to its mRNA. This chain is Large ribosomal subunit protein uL1, found in Xanthomonas oryzae pv. oryzae (strain KACC10331 / KXO85).